Consider the following 95-residue polypeptide: Complement inhibitor RaCI5 (95 aa).

The signal sequence occupies residues Met1–Ser21. Cystine bridges form between Cys35-Cys59, Cys40-Cys61, and Cys55-Cys76.

Belongs to the RaCI family. In terms of tissue distribution, expressed in salivary glands.

Its subcellular location is the secreted. Functionally, complement inhibitor. Prevents complement-mediated C5 activation by binding to C5. Binds C5 at a different binding site than the other tick complement inhibitors OmCI and CirpT1, and the drug eculizumab. The sequence is that of Complement inhibitor RaCI5 from Rhipicephalus appendiculatus (Brown ear tick).